An 87-amino-acid polypeptide reads, in one-letter code: Small ribosomal subunit protein bS16 (87 aa).

This sequence belongs to the bacterial ribosomal protein bS16 family.

This chain is Small ribosomal subunit protein bS16, found in Psychrobacter sp. (strain PRwf-1).